The primary structure comprises 25 residues: Flagellar filament outer layer protein (25 aa).

As to quaternary structure, the flagellum consists of an outer layer composed of repeating units of FlaA around a core that contains several antigenically related polypeptides.

It is found in the periplasmic flagellum. The protein resides in the periplasm. In terms of biological role, component of the outer layer of the flagella. This is Flagellar filament outer layer protein (flaA) from Treponema phagedenis.